Reading from the N-terminus, the 543-residue chain is CTP synthase (543 aa).

The tract at residues 1–265 (MARYIFITGG…DDEVLAAFGI (265 aa)) is amidoligase domain. A CTP-binding site is contributed by Ser13. Ser13 lines the UTP pocket. 14 to 19 (SLGKGL) serves as a coordination point for ATP. Tyr54 lines the L-glutamine pocket. An ATP-binding site is contributed by Asp71. Mg(2+)-binding residues include Asp71 and Glu139. CTP-binding positions include 146 to 148 (DIE), 186 to 191 (KTKPTQ), and Lys222. Residues 186-191 (KTKPTQ) and Lys222 contribute to the UTP site. 238–240 (RDV) lines the ATP pocket. Residues 291 to 542 (TIAIVGKYTG…IQAAMVQSRL (252 aa)) enclose the Glutamine amidotransferase type-1 domain. Gly353 contributes to the L-glutamine binding site. Residue Cys380 is the Nucleophile; for glutamine hydrolysis of the active site. L-glutamine contacts are provided by residues 381-384 (FGMQ), Glu404, and Arg470. Residues His515 and Glu517 contribute to the active site.

Belongs to the CTP synthase family. Homotetramer.

The enzyme catalyses UTP + L-glutamine + ATP + H2O = CTP + L-glutamate + ADP + phosphate + 2 H(+). It catalyses the reaction L-glutamine + H2O = L-glutamate + NH4(+). It carries out the reaction UTP + NH4(+) + ATP = CTP + ADP + phosphate + 2 H(+). The protein operates within pyrimidine metabolism; CTP biosynthesis via de novo pathway; CTP from UDP: step 2/2. Its activity is regulated as follows. Allosterically activated by GTP, when glutamine is the substrate; GTP has no effect on the reaction when ammonia is the substrate. The allosteric effector GTP functions by stabilizing the protein conformation that binds the tetrahedral intermediate(s) formed during glutamine hydrolysis. Inhibited by the product CTP, via allosteric rather than competitive inhibition. Its function is as follows. Catalyzes the ATP-dependent amination of UTP to CTP with either L-glutamine or ammonia as the source of nitrogen. Regulates intracellular CTP levels through interactions with the four ribonucleotide triphosphates. This is CTP synthase from Bradyrhizobium diazoefficiens (strain JCM 10833 / BCRC 13528 / IAM 13628 / NBRC 14792 / USDA 110).